The sequence spans 317 residues: Pantothenate kinase (317 aa).

G101 to S108 contacts ATP.

It belongs to the prokaryotic pantothenate kinase family.

It localises to the cytoplasm. It carries out the reaction (R)-pantothenate + ATP = (R)-4'-phosphopantothenate + ADP + H(+). It participates in cofactor biosynthesis; coenzyme A biosynthesis; CoA from (R)-pantothenate: step 1/5. The polypeptide is Pantothenate kinase (Actinobacillus succinogenes (strain ATCC 55618 / DSM 22257 / CCUG 43843 / 130Z)).